We begin with the raw amino-acid sequence, 163 residues long: Nucleotide-binding protein CKO_02735 (163 aa).

This sequence belongs to the YajQ family.

In terms of biological role, nucleotide-binding protein. This chain is Nucleotide-binding protein CKO_02735, found in Citrobacter koseri (strain ATCC BAA-895 / CDC 4225-83 / SGSC4696).